A 307-amino-acid polypeptide reads, in one-letter code: MATH domain and coiled-coil domain-containing protein At3g58380 (307 aa).

The MATH domain maps to 6 to 132 (DKKFVWVIKD…CREITIVIEV (127 aa)). Residues 238 to 290 (KVDWLEKKLKEVKEKKKNVDNGKARLQQIEEDLQKLNQKRLDLKDILDKEKAN) are a coiled coil.

The chain is MATH domain and coiled-coil domain-containing protein At3g58380 from Arabidopsis thaliana (Mouse-ear cress).